The following is a 158-amino-acid chain: 6,7-dimethyl-8-ribityllumazine synthase (158 aa).

5-amino-6-(D-ribitylamino)uracil is bound by residues phenylalanine 22, 57 to 59 (AVE), and 81 to 83 (AVI). 86–87 (GT) lines the (2S)-2-hydroxy-3-oxobutyl phosphate pocket. The active-site Proton donor is histidine 89. Phenylalanine 114 is a 5-amino-6-(D-ribitylamino)uracil binding site. (2S)-2-hydroxy-3-oxobutyl phosphate is bound at residue arginine 128.

This sequence belongs to the DMRL synthase family. Forms an icosahedral capsid composed of 60 subunits, arranged as a dodecamer of pentamers.

It carries out the reaction (2S)-2-hydroxy-3-oxobutyl phosphate + 5-amino-6-(D-ribitylamino)uracil = 6,7-dimethyl-8-(1-D-ribityl)lumazine + phosphate + 2 H2O + H(+). The protein operates within cofactor biosynthesis; riboflavin biosynthesis; riboflavin from 2-hydroxy-3-oxobutyl phosphate and 5-amino-6-(D-ribitylamino)uracil: step 1/2. In terms of biological role, catalyzes the formation of 6,7-dimethyl-8-ribityllumazine by condensation of 5-amino-6-(D-ribitylamino)uracil with 3,4-dihydroxy-2-butanone 4-phosphate. This is the penultimate step in the biosynthesis of riboflavin. This chain is 6,7-dimethyl-8-ribityllumazine synthase, found in Shewanella loihica (strain ATCC BAA-1088 / PV-4).